The sequence spans 220 residues: Urease accessory protein UreE (220 aa).

Residues 145 to 220 (EGGAYSAGGH…QIHKRRPDNL (76 aa)) are disordered. Residues 156–177 (HGHDHGSHEHSAHDHGKHDHAP) show a composition bias toward basic and acidic residues. Positions 178 to 188 (AKPATAATPAA) are enriched in low complexity. Residues 191-206 (HGPDCNHGHDHAHEAK) are compositionally biased toward basic and acidic residues.

Belongs to the UreE family.

The protein resides in the cytoplasm. Its function is as follows. Involved in urease metallocenter assembly. Binds nickel. Probably functions as a nickel donor during metallocenter assembly. This Polaromonas sp. (strain JS666 / ATCC BAA-500) protein is Urease accessory protein UreE.